A 417-amino-acid chain; its full sequence is Alpha-ionylideneethane synthase aba3 (417 aa).

It belongs to the alpha-ionylideneethane synthase family.

It functions in the pathway hormone biosynthesis. In terms of biological role, alpha-ionylideneethane synthase; part of the gene cluster that mediates the biosynthesis of abscisic acid (ABA), a phytohormone that acts antagonistically toward salicylic acid (SA), jasmonic acid (JA) and ethylene (ETH) signaling, to impede plant defense responses. The first step of the pathway catalyzes the reaction from farnesyl diphosphate to alpha-ionylideneethane performed by the alpha-ionylideneethane synthase aba3 via a three-step reaction mechanism involving 2 neutral intermediates, beta-farnesene and allofarnesene. The cytochrome P450 monooxygenase aba1 might then be involved in the conversion of alpha-ionylideneethane to alpha-ionylideneacetic acid. Alpha-ionylideneacetic acid is further converted to abscisic acid in 2 steps involving the cytochrome P450 monooxygenase aba2 and the short-chain dehydrogenase/reductase aba4, via the intermediates 1'-deoxy-ABA or 1',4'-trans-diol-ABA, depending on the order of action of these 2 enzymes. Aba2 is responsible for the hydroxylation of carbon atom C-1' and aba4 might be involved in the oxidation of the C-4' carbon atom. This chain is Alpha-ionylideneethane synthase aba3, found in Botryotinia fuckeliana (Noble rot fungus).